Here is a 913-residue protein sequence, read N- to C-terminus: Eukaryotic translation initiation factor 3 subunit C (913 aa).

The disordered stretch occupies residues 1–22; the sequence is MSRFFANGSDSESESSEEEVQA. Acidic residues predominate over residues 11 to 20; the sequence is SESESSEEEV. Phosphoserine is present on residues serine 34, serine 165, serine 177, and serine 186. The segment at 157–285 is disordered; sequence FREAPDQESD…KRAEDDEDGE (129 aa). Residues 162-171 are compositionally biased toward acidic residues; that stretch reads DQESDVEEGE. Positions 172-184 are enriched in basic and acidic residues; sequence GEPHDSDGDRAGA. The span at 214–239 shows a compositional bias: acidic residues; it reads DEDDSDDSIDWDSDTESETESSEDEN. A compositionally biased stretch (basic and acidic residues) spans 244–263; the sequence is MRERFLKRTTEKEDKDDDKR. Over residues 264–276 the composition is skewed to basic residues; the sequence is KDKRKEQKHKVRK. The PCI domain maps to 645-821; it reads FHMHINLELL…ETVVMHRSEP (177 aa). The segment at 856-913 is disordered; sequence RGNMGNRDRGYNRNQNNQGGNWGGQRRDNRNQRNRNQRGHHKQQQQQQQQQVQTIEEE. Basic residues predominate over residues 887–898; the sequence is QRNRNQRGHHKQ.

The protein belongs to the eIF-3 subunit C family. Component of the eukaryotic translation initiation factor 3 (eIF-3) complex. The eIF-3 complex interacts with pix.

Its subcellular location is the cytoplasm. In terms of biological role, component of the eukaryotic translation initiation factor 3 (eIF-3) complex, which is involved in protein synthesis of a specialized repertoire of mRNAs and, together with other initiation factors, stimulates binding of mRNA and methionyl-tRNAi to the 40S ribosome. The eIF-3 complex specifically targets and initiates translation of a subset of mRNAs involved in cell proliferation. This chain is Eukaryotic translation initiation factor 3 subunit C, found in Drosophila mojavensis (Fruit fly).